Reading from the N-terminus, the 212-residue chain is Hemagglutinin 2 (212 aa).

It localises to the secreted. In terms of biological role, induces agglutination of neuraminidase-treated erythrocytes. This Eikenella corrodens protein is Hemagglutinin 2 (hag2).